A 357-amino-acid chain; its full sequence is Probable dual-specificity RNA methyltransferase RlmN (357 aa).

Catalysis depends on Glu-95, which acts as the Proton acceptor. The 235-residue stretch at 106–340 folds into the Radical SAM core domain; the sequence is NRDRHTVCVS…VSVREEKGTD (235 aa). Cys-113 and Cys-345 are oxidised to a cystine. The [4Fe-4S] cluster site is built by Cys-120, Cys-124, and Cys-127. S-adenosyl-L-methionine is bound by residues 172 to 173, Ser-204, 227 to 229, and Asn-302; these read GE and SLH. The active-site S-methylcysteine intermediate is Cys-345.

It belongs to the radical SAM superfamily. RlmN family. [4Fe-4S] cluster serves as cofactor.

The protein resides in the cytoplasm. The catalysed reaction is adenosine(2503) in 23S rRNA + 2 reduced [2Fe-2S]-[ferredoxin] + 2 S-adenosyl-L-methionine = 2-methyladenosine(2503) in 23S rRNA + 5'-deoxyadenosine + L-methionine + 2 oxidized [2Fe-2S]-[ferredoxin] + S-adenosyl-L-homocysteine. It catalyses the reaction adenosine(37) in tRNA + 2 reduced [2Fe-2S]-[ferredoxin] + 2 S-adenosyl-L-methionine = 2-methyladenosine(37) in tRNA + 5'-deoxyadenosine + L-methionine + 2 oxidized [2Fe-2S]-[ferredoxin] + S-adenosyl-L-homocysteine. Its function is as follows. Specifically methylates position 2 of adenine 2503 in 23S rRNA and position 2 of adenine 37 in tRNAs. The sequence is that of Probable dual-specificity RNA methyltransferase RlmN from Desulfitobacterium hafniense (strain Y51).